We begin with the raw amino-acid sequence, 421 residues long: Glutamate-1-semialdehyde 2,1-aminomutase 1 (421 aa).

N6-(pyridoxal phosphate)lysine is present on Lys258.

This sequence belongs to the class-III pyridoxal-phosphate-dependent aminotransferase family. HemL subfamily. Pyridoxal 5'-phosphate is required as a cofactor.

Its subcellular location is the cytoplasm. It catalyses the reaction (S)-4-amino-5-oxopentanoate = 5-aminolevulinate. The protein operates within porphyrin-containing compound metabolism; protoporphyrin-IX biosynthesis; 5-aminolevulinate from L-glutamyl-tRNA(Glu): step 2/2. This chain is Glutamate-1-semialdehyde 2,1-aminomutase 1, found in Cenarchaeum symbiosum (strain A).